The sequence spans 344 residues: Phenylalanine--tRNA ligase alpha subunit (344 aa).

Residue E261 participates in Mg(2+) binding.

Belongs to the class-II aminoacyl-tRNA synthetase family. Phe-tRNA synthetase alpha subunit type 1 subfamily. Tetramer of two alpha and two beta subunits. Mg(2+) is required as a cofactor.

The protein localises to the cytoplasm. It catalyses the reaction tRNA(Phe) + L-phenylalanine + ATP = L-phenylalanyl-tRNA(Phe) + AMP + diphosphate + H(+). The protein is Phenylalanine--tRNA ligase alpha subunit of Ehrlichia ruminantium (strain Gardel).